We begin with the raw amino-acid sequence, 465 residues long: Cytochrome P450 85A1 (465 aa).

A helical membrane pass occupies residues 2–22 (GAMMVMMGLLLIIVSLCSALL). C415 lines the heme pocket.

Belongs to the cytochrome P450 family. It depends on heme as a cofactor. In terms of tissue distribution, mainly expressed in apical shoots, hypocotyls, siliques and roots. Also present in the female gametophyte.

The protein resides in the membrane. The catalysed reaction is 6-deoxoteasterone + reduced [NADPH--hemoprotein reductase] + O2 = 6alpha-hydroxyteasterone + oxidized [NADPH--hemoprotein reductase] + H2O + H(+). It carries out the reaction 6alpha-hydroxytyphasterol + reduced [NADPH--hemoprotein reductase] + O2 = teasterone + oxidized [NADPH--hemoprotein reductase] + 2 H2O + H(+). The enzyme catalyses 3-dehydro-6-deoxoteasterone + reduced [NADPH--hemoprotein reductase] + O2 = 3-dehydro-6alpha-hydroxyteasterone + oxidized [NADPH--hemoprotein reductase] + H2O + H(+). It catalyses the reaction 3-dehydro-6alpha-hydroxyteasterone + reduced [NADPH--hemoprotein reductase] + O2 = 3-dehydroteasterone + oxidized [NADPH--hemoprotein reductase] + 2 H2O + H(+). The catalysed reaction is 6-deoxotyphasterol + reduced [NADPH--hemoprotein reductase] + O2 = 6alpha-hydroxytyphasterol + oxidized [NADPH--hemoprotein reductase] + H2O + H(+). It carries out the reaction 6alpha-hydroxytyphasterol + reduced [NADPH--hemoprotein reductase] + O2 = typhasterol + oxidized [NADPH--hemoprotein reductase] + 2 H2O + H(+). The enzyme catalyses 6-deoxocastasterone + reduced [NADPH--hemoprotein reductase] + O2 = 6alpha-hydroxycastasterone + oxidized [NADPH--hemoprotein reductase] + H2O + H(+). It catalyses the reaction 6alpha-hydroxycastasterone + reduced [NADPH--hemoprotein reductase] + O2 = castasterone + oxidized [NADPH--hemoprotein reductase] + 2 H2O + H(+). The catalysed reaction is 6-deoxocastasterone + 2 reduced [NADPH--hemoprotein reductase] + 2 O2 = castasterone + 2 oxidized [NADPH--hemoprotein reductase] + 3 H2O + 2 H(+). It carries out the reaction 6-deoxoteasterone + 2 reduced [NADPH--hemoprotein reductase] + 2 O2 = teasterone + 2 oxidized [NADPH--hemoprotein reductase] + 3 H2O + 2 H(+). The enzyme catalyses 6-deoxotyphasterol + 2 reduced [NADPH--hemoprotein reductase] + 2 O2 = typhasterol + 2 oxidized [NADPH--hemoprotein reductase] + 3 H2O + 2 H(+). It catalyses the reaction 3-dehydro-6-deoxoteasterone + 2 reduced [NADPH--hemoprotein reductase] + 2 O2 = 3-dehydroteasterone + 2 oxidized [NADPH--hemoprotein reductase] + 3 H2O + 2 H(+). It participates in plant hormone biosynthesis; brassinosteroid biosynthesis. Catalyzes the C6-oxidation step in brassinosteroids biosynthesis. Converts 6-deoxocastasterone (6-deoxoCS) to castasterone (CS). May also convert 6-deoxoteasterone (6-deoxoTE) to teasterone (TE), 3-dehydro-6-deoxoteasterone (6-deoxo3DT, 6-deoxo-3-DHT) to 3-dehydroteasterone (3DT, 3-DHT), and 6-deoxotyphasterol (6-deoxoTY) to typhasterol (TY). Required for the initiation of female gametogenesis (megagametogenesis). The polypeptide is Cytochrome P450 85A1 (Arabidopsis thaliana (Mouse-ear cress)).